Reading from the N-terminus, the 236-residue chain is Small ribosomal subunit protein uS2c (236 aa).

It belongs to the universal ribosomal protein uS2 family.

Its subcellular location is the plastid. The protein localises to the chloroplast. The sequence is that of Small ribosomal subunit protein uS2c (rps2) from Oryza nivara (Indian wild rice).